The chain runs to 932 residues: LPS-assembly protein LptD (932 aa).

Residues 1–33 (MALKSPAFRRKFPLLVTGGLLALQPLATSYAVA) form the signal peptide. A disordered region spans residues 54–87 (PVNNLPPRPVHEGAAVSSGTEAASEGETADRPML).

Belongs to the LptD family. In terms of assembly, component of the lipopolysaccharide transport and assembly complex. Interacts with LptE and LptA.

The protein resides in the cell outer membrane. In terms of biological role, together with LptE, is involved in the assembly of lipopolysaccharide (LPS) at the surface of the outer membrane. This Pseudomonas putida (strain GB-1) protein is LPS-assembly protein LptD.